The chain runs to 400 residues: Cysteine desulfurase 1 (400 aa).

Pyridoxal 5'-phosphate contacts are provided by residues 71–72, asparagine 150, glutamine 178, and 198–200; these read GT and SGH. The residue at position 201 (lysine 201) is an N6-(pyridoxal phosphate)lysine. Threonine 236 is a pyridoxal 5'-phosphate binding site. The Cysteine persulfide intermediate role is filled by cysteine 324. Cysteine 324 is a binding site for [2Fe-2S] cluster.

Belongs to the class-V pyridoxal-phosphate-dependent aminotransferase family. NifS/IscS subfamily. Homodimer. Pyridoxal 5'-phosphate is required as a cofactor.

The enzyme catalyses (sulfur carrier)-H + L-cysteine = (sulfur carrier)-SH + L-alanine. Functionally, catalyzes the removal of elemental sulfur atoms from cysteine to produce alanine. Seems to participate in the biosynthesis of the nitrogenase metalloclusters by providing the inorganic sulfur required for the Fe-S core formation. This Trichormus variabilis (strain ATCC 29413 / PCC 7937) (Anabaena variabilis) protein is Cysteine desulfurase 1.